A 214-amino-acid chain; its full sequence is UPF0056 membrane protein aq_540 (214 aa).

The next 6 helical transmembrane spans lie at 17–37 (FLSL…ISLM), 47–67 (VIAL…LISG), 73–93 (FMGI…FLIA), 122–142 (LIPL…VLVL), 153–173 (VALF…YSLS), and 185–205 (INLI…QFVV).

This sequence belongs to the UPF0056 (MarC) family.

It localises to the cell membrane. The polypeptide is UPF0056 membrane protein aq_540 (Aquifex aeolicus (strain VF5)).